Reading from the N-terminus, the 261-residue chain is 5'-nucleotidase SurE (261 aa).

The a divalent metal cation site is built by Asp-17, Asp-18, Ser-48, and Asn-104.

It belongs to the SurE nucleotidase family. A divalent metal cation is required as a cofactor.

It is found in the cytoplasm. The enzyme catalyses a ribonucleoside 5'-phosphate + H2O = a ribonucleoside + phosphate. Nucleotidase that shows phosphatase activity on nucleoside 5'-monophosphates. The protein is 5'-nucleotidase SurE of Deinococcus geothermalis (strain DSM 11300 / CIP 105573 / AG-3a).